The following is an 843-amino-acid chain: Protein translocase subunit SecA 1 (843 aa).

ATP contacts are provided by residues Gln-91, Gly-109–Thr-113, and Asp-498. The segment covering Glu-799 to Lys-813 has biased composition (basic and acidic residues). Residues Glu-799–Asn-826 are disordered. Cys-829, Cys-831, Cys-840, and His-841 together coordinate Zn(2+).

The protein belongs to the SecA family. In terms of assembly, monomer and homodimer. Part of the essential Sec protein translocation apparatus which comprises SecA, SecYEG and auxiliary proteins SecDF. Other proteins may also be involved. Zn(2+) is required as a cofactor.

The protein resides in the cell membrane. Its subcellular location is the cytoplasm. It catalyses the reaction ATP + H2O + cellular proteinSide 1 = ADP + phosphate + cellular proteinSide 2.. In terms of biological role, part of the Sec protein translocase complex. Interacts with the SecYEG preprotein conducting channel. Has a central role in coupling the hydrolysis of ATP to the transfer of proteins into and across the cell membrane, serving as an ATP-driven molecular motor driving the stepwise translocation of polypeptide chains across the membrane. In Staphylococcus aureus (strain N315), this protein is Protein translocase subunit SecA 1.